The following is a 471-amino-acid chain: Major facilitator-type transporter psiT1 (471 aa).

The segment at 1 to 36 (MNPTTATDAHERTSLLSGRPQSAANSTAPYERQVQP) is disordered. Residues 14-36 (SLLSGRPQSAANSTAPYERQVQP) show a composition bias toward polar residues. A glycan (N-linked (GlcNAc...) asparagine) is linked at Asn25. 8 helical membrane-spanning segments follow: residues 44-64 (TPVT…TMVI), 108-128 (AIMV…GTGI), 140-160 (PVLM…LTVQ), 168-188 (LVTF…TTVF), 212-232 (GWLV…TTFL), 237-257 (AVYI…AFVL), 322-342 (LHSF…LIFF), and 356-376 (VMTT…PLFI). Residue Asn384 is glycosylated (N-linked (GlcNAc...) asparagine). A helical transmembrane segment spans residues 424 to 444 (VHITVISWTIESLAYIVLGTV).

It belongs to the major facilitator superfamily. TCR/Tet family.

Its subcellular location is the membrane. Functionally, major facilitator-type transporter; part of the gene cluster that mediates the biosynthesis of psilocybin, a psychotropic tryptamine-derived natural product. The sequence is that of Major facilitator-type transporter psiT1 from Psilocybe cyanescens.